Reading from the N-terminus, the 178-residue chain is ATP synthase subunit delta (178 aa).

It belongs to the ATPase delta chain family. As to quaternary structure, F-type ATPases have 2 components, F(1) - the catalytic core - and F(0) - the membrane proton channel. F(1) has five subunits: alpha(3), beta(3), gamma(1), delta(1), epsilon(1). F(0) has three main subunits: a(1), b(2) and c(10-14). The alpha and beta chains form an alternating ring which encloses part of the gamma chain. F(1) is attached to F(0) by a central stalk formed by the gamma and epsilon chains, while a peripheral stalk is formed by the delta and b chains.

Its subcellular location is the cell membrane. F(1)F(0) ATP synthase produces ATP from ADP in the presence of a proton or sodium gradient. F-type ATPases consist of two structural domains, F(1) containing the extramembraneous catalytic core and F(0) containing the membrane proton channel, linked together by a central stalk and a peripheral stalk. During catalysis, ATP synthesis in the catalytic domain of F(1) is coupled via a rotary mechanism of the central stalk subunits to proton translocation. In terms of biological role, this protein is part of the stalk that links CF(0) to CF(1). It either transmits conformational changes from CF(0) to CF(1) or is implicated in proton conduction. The chain is ATP synthase subunit delta from Streptococcus pyogenes serotype M1.